Here is a 457-residue protein sequence, read N- to C-terminus: Argininosuccinate lyase (457 aa).

It belongs to the lyase 1 family. Argininosuccinate lyase subfamily.

The protein localises to the cytoplasm. It carries out the reaction 2-(N(omega)-L-arginino)succinate = fumarate + L-arginine. The protein operates within amino-acid biosynthesis; L-arginine biosynthesis; L-arginine from L-ornithine and carbamoyl phosphate: step 3/3. The polypeptide is Argininosuccinate lyase (Histophilus somni (strain 129Pt) (Haemophilus somnus)).